We begin with the raw amino-acid sequence, 194 residues long: Oligoribonuclease (194 aa).

The Exonuclease domain occupies 11–174 (LIWIDLEMTG…SDVRDSIDEL (164 aa)). The active site involves Tyr-132.

Belongs to the oligoribonuclease family.

The protein resides in the cytoplasm. Its function is as follows. 3'-to-5' exoribonuclease specific for small oligoribonucleotides. This Xanthomonas axonopodis pv. citri (strain 306) protein is Oligoribonuclease.